Consider the following 194-residue polypeptide: ATP-dependent Clp protease proteolytic subunit 3 (194 aa).

The Nucleophile role is filled by Ser-96. His-121 is an active-site residue.

It belongs to the peptidase S14 family. In terms of assembly, fourteen ClpP subunits assemble into 2 heptameric rings which stack back to back to give a disk-like structure with a central cavity, resembling the structure of eukaryotic proteasomes.

The protein localises to the cytoplasm. It carries out the reaction Hydrolysis of proteins to small peptides in the presence of ATP and magnesium. alpha-casein is the usual test substrate. In the absence of ATP, only oligopeptides shorter than five residues are hydrolyzed (such as succinyl-Leu-Tyr-|-NHMec, and Leu-Tyr-Leu-|-Tyr-Trp, in which cleavage of the -Tyr-|-Leu- and -Tyr-|-Trp bonds also occurs).. Cleaves peptides in various proteins in a process that requires ATP hydrolysis. Has a chymotrypsin-like activity. Plays a major role in the degradation of misfolded proteins. The polypeptide is ATP-dependent Clp protease proteolytic subunit 3 (Rhizobium johnstonii (strain DSM 114642 / LMG 32736 / 3841) (Rhizobium leguminosarum bv. viciae)).